Consider the following 177-residue polypeptide: MASHGSSCGACKFLRRKCNRDCVFSPYFSYEQASSHFAAVHKVFGASNVSKHLLHLPQHQRNIAAITISYEALSRMRDPVYGCVAHIFALHQQVVTLQEEIEFLGSQMKNFSYSNQNGSQLNNIPEFVNQMTMATTNFVDESVLNNADGRNCYDGFFTNSEEMLVNHQWLQNMDYYY.

An LOB domain is found at 6–108 (SSCGACKFLR…EEIEFLGSQM (103 aa)).

This sequence belongs to the LOB domain-containing protein family. In terms of tissue distribution, expressed in roots.

This Arabidopsis thaliana (Mouse-ear cress) protein is LOB domain-containing protein 33 (LBD33).